A 148-amino-acid polypeptide reads, in one-letter code: Photosystem II extrinsic protein U, chloroplastic (148 aa).

A chloroplast-targeting transit peptide spans 1–32; it reads MKLAVFAVLISTVAAFVAPNGVQRAATTELNA. Residues 33-54 constitute a thylakoid transit peptide; sequence ERREFLSAAAVAAGLAFPLTAN.

Belongs to the PsbU family. PSII is composed of 1 copy each of membrane proteins PsbA, PsbB, PsbC, PsbD, PsbE, PsbF, PsbH, PsbI, PsbJ, PsbK, PsbL, PsbM, PsbT, PsbX, PsbY, PsbZ, Psb30/Ycf12, at least 3 peripheral proteins of the oxygen-evolving complex and a large number of cofactors. It forms dimeric complexes. The oxygen-evolving complex may be composed of PsbO, PsbQ', PsbV and PsbU.

It localises to the plastid. The protein resides in the chloroplast thylakoid membrane. Functionally, one of the extrinsic, lumenal subunits of photosystem II (PSII), which stabilize and protect the oxygen-evolving complex. PSII is a light-driven water plastoquinone oxidoreductase, using light energy to abstract electrons from H(2)O, generating a proton gradient subsequently used for ATP formation. Stabilizes the structure of photosystem II oxygen-evolving complex (OEC), the ion environment of oxygen evolution and protects the OEC against heat-induced inactivation. This Phaeodactylum tricornutum (Diatom) protein is Photosystem II extrinsic protein U, chloroplastic.